The chain runs to 113 residues: Inner membrane protein YiaB (113 aa).

The Cytoplasmic portion of the chain corresponds to 1 to 9 (MKTSKTVAK). A helical membrane pass occupies residues 10–20 (LLFVVGALVYL). Topologically, residues 21–33 (VGLWISCPLLSGK) are periplasmic. The chain crosses the membrane as a helical span at residues 34 to 51 (GYFLGVLMTATFGNYAYL). Residues 52–61 (RAEKLGQLDD) lie on the Cytoplasmic side of the membrane. A helical membrane pass occupies residues 62 to 82 (FFTHICQLVALITIGLLFIGV). Residues 83–84 (LN) are Periplasmic-facing. Residues 85–105 (APINTYEMVIYPIAFFVCLFG) form a helical membrane-spanning segment. The Cytoplasmic portion of the chain corresponds to 106-113 (QMRLFRSA).

It localises to the cell inner membrane. The chain is Inner membrane protein YiaB (yiaB) from Escherichia coli (strain K12).